A 518-amino-acid polypeptide reads, in one-letter code: GMP synthase [glutamine-hydrolyzing] (518 aa).

The 191-residue stretch at 13–203 (KIIVLDFGSQ…ALNICGCKGD (191 aa)) folds into the Glutamine amidotransferase type-1 domain. Catalysis depends on cysteine 90, which acts as the Nucleophile. Active-site residues include histidine 177 and glutamate 179. The GMPS ATP-PPase domain occupies 204–393 (WTMENFSEVE…LGMPDAIVWR (190 aa)). 231–237 (SGGVDSS) provides a ligand contact to ATP.

Homodimer.

The catalysed reaction is XMP + L-glutamine + ATP + H2O = GMP + L-glutamate + AMP + diphosphate + 2 H(+). Its pathway is purine metabolism; GMP biosynthesis; GMP from XMP (L-Gln route): step 1/1. Its function is as follows. Catalyzes the synthesis of GMP from XMP. This Listeria innocua serovar 6a (strain ATCC BAA-680 / CLIP 11262) protein is GMP synthase [glutamine-hydrolyzing].